The chain runs to 227 residues: MGGCVGRERAETRGRGSRTQRKRGGRNEPLKKDKPKWKSDYPMTEGQLRSKRDEFWDTAPAFEGRKEIWDALKAAAVALECSDHELAQAIVDGANITLPHGSLTECYDELGNRYQLPVYCLAPPVNLISERSEEDLTDNPEPQTAQKKEFQLKVRLSTGKDLRLNASMSDTIGLLKKQLQAQEDIDISHQRWFFSGKLLTDKTRLQDTKIQKDFVIQVIVNQPAPNH.

Residues 1 to 14 show a composition bias toward basic and acidic residues; it reads MGGCVGRERAETRG. Positions 1-45 are disordered; sequence MGGCVGRERAETRGRGSRTQRKRGGRNEPLKKDKPKWKSDYPMTE. The span at 15–24 shows a compositional bias: basic residues; sequence RGSRTQRKRG. The span at 25 to 39 shows a compositional bias: basic and acidic residues; it reads GRNEPLKKDKPKWKS. The 76-residue stretch at 150–225 folds into the Ubiquitin-like domain; sequence FQLKVRLSTG…IQVIVNQPAP (76 aa).

In terms of biological role, may be involved in the regulation of cellular senescence through a positive feedback loop with TP53. This chain is Ubiquitin domain-containing protein 1 (ubtd1), found in Danio rerio (Zebrafish).